A 357-amino-acid chain; its full sequence is Protein RecA (357 aa).

Residue 67 to 74 coordinates ATP; it reads GPESSGKT. The tract at residues 335 to 357 is disordered; that stretch reads LASSASDDESTEGNIDLETGEIF.

It belongs to the RecA family.

The protein resides in the cytoplasm. Can catalyze the hydrolysis of ATP in the presence of single-stranded DNA, the ATP-dependent uptake of single-stranded DNA by duplex DNA, and the ATP-dependent hybridization of homologous single-stranded DNAs. It interacts with LexA causing its activation and leading to its autocatalytic cleavage. This Shewanella putrefaciens (strain CN-32 / ATCC BAA-453) protein is Protein RecA.